Reading from the N-terminus, the 173-residue chain is ATP-dependent protease subunit HslV (173 aa).

Thr2 is a catalytic residue. Positions 158, 161, and 164 each coordinate Na(+).

The protein belongs to the peptidase T1B family. HslV subfamily. In terms of assembly, a double ring-shaped homohexamer of HslV is capped on each side by a ring-shaped HslU homohexamer. The assembly of the HslU/HslV complex is dependent on binding of ATP.

Its subcellular location is the cytoplasm. It carries out the reaction ATP-dependent cleavage of peptide bonds with broad specificity.. With respect to regulation, allosterically activated by HslU binding. Functionally, protease subunit of a proteasome-like degradation complex believed to be a general protein degrading machinery. The sequence is that of ATP-dependent protease subunit HslV from Haemophilus ducreyi (strain 35000HP / ATCC 700724).